The sequence spans 578 residues: Arginine--tRNA ligase (578 aa).

Residues 123–133 (PNLAKEMHVGH) carry the 'HIGH' region motif.

The protein belongs to the class-I aminoacyl-tRNA synthetase family. In terms of assembly, monomer.

It localises to the cytoplasm. The catalysed reaction is tRNA(Arg) + L-arginine + ATP = L-arginyl-tRNA(Arg) + AMP + diphosphate. The chain is Arginine--tRNA ligase from Hahella chejuensis (strain KCTC 2396).